Reading from the N-terminus, the 328-residue chain is Malate dehydrogenase (328 aa).

11 to 17 (GAAGQIG) is a binding site for NAD(+). Substrate is bound by residues arginine 92 and arginine 98. Residues asparagine 105, glutamine 112, and 129 to 131 (VGN) each bind NAD(+). The substrate site is built by asparagine 131 and arginine 162. Residue histidine 187 is the Proton acceptor of the active site.

Belongs to the LDH/MDH superfamily. MDH type 2 family.

It carries out the reaction (S)-malate + NAD(+) = oxaloacetate + NADH + H(+). In terms of biological role, catalyzes the reversible oxidation of malate to oxaloacetate. This is Malate dehydrogenase from Coxiella burnetii (strain RSA 493 / Nine Mile phase I).